The sequence spans 288 residues: Diaminopimelate epimerase (288 aa).

2 residues coordinate substrate: Asn14 and Asn67. Cys76 acts as the Proton donor in catalysis. Substrate is bound by residues 77–78, Asn166, Asn199, and 217–218; these read GN and ER. Catalysis depends on Cys226, which acts as the Proton acceptor. 227 to 228 serves as a coordination point for substrate; sequence GT.

The protein belongs to the diaminopimelate epimerase family. In terms of assembly, homodimer.

It localises to the cytoplasm. It carries out the reaction (2S,6S)-2,6-diaminopimelate = meso-2,6-diaminopimelate. It functions in the pathway amino-acid biosynthesis; L-lysine biosynthesis via DAP pathway; DL-2,6-diaminopimelate from LL-2,6-diaminopimelate: step 1/1. Catalyzes the stereoinversion of LL-2,6-diaminopimelate (L,L-DAP) to meso-diaminopimelate (meso-DAP), a precursor of L-lysine and an essential component of the bacterial peptidoglycan. The polypeptide is Diaminopimelate epimerase (Bacillus cytotoxicus (strain DSM 22905 / CIP 110041 / 391-98 / NVH 391-98)).